The sequence spans 209 residues: Kynurenine formamidase (209 aa).

Residue Trp20 participates in substrate binding. Residues His50, His54, and Asp56 each contribute to the Zn(2+) site. Residue His60 is the Proton donor/acceptor of the active site. Zn(2+) is bound by residues His161 and Glu173.

The protein belongs to the Cyclase 1 superfamily. KynB family. In terms of assembly, homodimer. Requires Zn(2+) as cofactor.

The catalysed reaction is N-formyl-L-kynurenine + H2O = L-kynurenine + formate + H(+). The protein operates within amino-acid degradation; L-tryptophan degradation via kynurenine pathway; L-kynurenine from L-tryptophan: step 2/2. Functionally, catalyzes the hydrolysis of N-formyl-L-kynurenine to L-kynurenine, the second step in the kynurenine pathway of tryptophan degradation. The protein is Kynurenine formamidase of Bacillus mycoides (strain KBAB4) (Bacillus weihenstephanensis).